The chain runs to 540 residues: MAKDIKFSADARSSMVRGVDILANTVKVTLGPKGRNVVLEKSFGSPLITNDGVTIAKEIELEDHFENMGAKLVSEVASKTNDIAGDGTTTATVLTQAIVREGIKNVTAGANPIGIRRGIEAAVATAVEALKSNSVPVSNKEAIAQVAAVSSRSEKVGEYISEAMEKVGNDGVITIEESKGMETELDVVEGMQFDRGYLSQYMVTDNEKMVAELDNPYILITDKKISNIQEILPLLENILKTNRPLLIVADDVDGEALPTLVLNKIRGTFNVVAVKAPGFGDRRKAMLEDIAILTGGTVITDDLGLELKDATIEALGQASKVTVDKDSTVIVEGSGNPEAIANRVAVIKSQIESSTSEFDREKLQERLAKLSGGVAVIKVGAATETELKEMKLRIEDALNATRAAVEEGIVSGGGTAYINVLDAVAGLELAGDEGTGRNIVLRALEEPVRQIALNAGFEGSIVIDRLKNSEVGTGFNAATGEWVNMIEAGIIDPVKVTRSALQNAASVASLILTTEAVVANQPEPASPAPAMDPGMMGGMM.

ATP is bound by residues T29–P32, D86–T90, G413, N476–A478, and D492.

Belongs to the chaperonin (HSP60) family. As to quaternary structure, forms a cylinder of 14 subunits composed of two heptameric rings stacked back-to-back. Interacts with the co-chaperonin GroES.

It localises to the cytoplasm. The catalysed reaction is ATP + H2O + a folded polypeptide = ADP + phosphate + an unfolded polypeptide.. Together with its co-chaperonin GroES, plays an essential role in assisting protein folding. The GroEL-GroES system forms a nano-cage that allows encapsulation of the non-native substrate proteins and provides a physical environment optimized to promote and accelerate protein folding. In Streptococcus sanguinis, this protein is Chaperonin GroEL.